The chain runs to 226 residues: MNIEVGNVSHTGAIISWSPSEPCLEDYYHIMYRPNWNSIFSGYLRYNFHHEEKVPRTITSVALEHLAPSTLYFLCISCKKAAFPYSHYCTMFHTLDKSPLAAGGSLVDPQISLWVLMAILLACFTAVLAFICLQFWCLRCHEPRWSYRAGQMEEANGLVRWPEETPALGQREEDLQGFPLEELPRKNSGARAKAEPEAEAIQDALEVVALAREIGNQPAILPHYRE.

The region spanning 1–101 (MNIEVGNVSH…FHTLDKSPLA (101 aa)) is the Fibronectin type-III domain. Residues 113 to 133 (LWVLMAILLACFTAVLAFICL) form a helical membrane-spanning segment.

The protein localises to the membrane. This chain is Fibronectin type III domain-containing protein 9 (Fndc9), found in Mus musculus (Mouse).